The following is a 504-amino-acid chain: Peptidyl-prolyl cis-trans isomerase CYP57 (504 aa).

Serine 2 carries the post-translational modification N-acetylserine. Residues 16–167 form the PPIase cyclophilin-type domain; it reads IVNTTHGPID…DPAPKILSVE (152 aa). The stretch at 204–274 forms a coiled coil; that stretch reads NLLSFGEEAE…AKKEAAQKDK (71 aa). 3 stretches are compositionally biased toward basic and acidic residues: residues 237 to 275, 344 to 354, and 364 to 374; these read RLLK…KDKS, EDEKPRMEKLS, and AKAEHMEKGDT. Disordered regions lie at residues 237-374, 416-441, and 482-504; these read RLLK…KGDT, AKPF…KEED, and EKFN…KSLA. Positions 416-434 are enriched in polar residues; sequence AKPFTSSNEPVVLTSSSEP. Residues 494–504 show a composition bias toward basic and acidic residues; the sequence is REREWSGKSLA.

It belongs to the cyclophilin-type PPIase family. As to expression, ubiquitous.

Its subcellular location is the nucleus. It localises to the cytoplasm. The catalysed reaction is [protein]-peptidylproline (omega=180) = [protein]-peptidylproline (omega=0). In terms of biological role, PPIases accelerate the folding of proteins. It catalyzes the cis-trans isomerization of proline imidic peptide bonds in oligopeptides. Involved in plant response to pathogen infection by increasing PAD4 expression in absence of EDS1 up-regulation. The polypeptide is Peptidyl-prolyl cis-trans isomerase CYP57 (CYP57) (Arabidopsis thaliana (Mouse-ear cress)).